We begin with the raw amino-acid sequence, 327 residues long: GTPase Obg (327 aa).

In terms of domain architecture, Obg spans 2 to 160 (HILKDSLSIT…LNLRLELSLI (159 aa)). One can recognise an OBG-type G domain in the interval 161–326 (ADIGLVGFPN…LVSELFALSR (166 aa)). GTP-binding positions include 167-174 (GFPNAGKS), 192-196 (FTTRF), 213-216 (DVPG), 280-283 (NKLD), and 307-309 (SIY). Residues Ser174 and Thr194 each contribute to the Mg(2+) site.

It belongs to the TRAFAC class OBG-HflX-like GTPase superfamily. OBG GTPase family. Monomer. Mg(2+) serves as cofactor.

It localises to the cytoplasm. Its function is as follows. An essential GTPase which binds GTP, GDP and possibly (p)ppGpp with moderate affinity, with high nucleotide exchange rates and a fairly low GTP hydrolysis rate. Plays a role in control of the cell cycle, stress response, ribosome biogenesis and in those bacteria that undergo differentiation, in morphogenesis control. The chain is GTPase Obg from Borrelia hermsii (strain HS1 / DAH).